Reading from the N-terminus, the 276-residue chain is Large ribosomal subunit protein uL2c (276 aa).

A disordered region spans residues 223–254 (VVKNPIDHPHGGGEGRSPIGRAKPVTPWGQPA).

It belongs to the universal ribosomal protein uL2 family. As to quaternary structure, part of the 50S ribosomal subunit.

Its subcellular location is the plastid. It localises to the chloroplast. This Emiliania huxleyi (Coccolithophore) protein is Large ribosomal subunit protein uL2c (rpl2).